Here is a 292-residue protein sequence, read N- to C-terminus: Ribosomal protein L11 methyltransferase (292 aa).

The S-adenosyl-L-methionine site is built by Thr144, Gly165, Asp187, and Asn229.

This sequence belongs to the methyltransferase superfamily. PrmA family.

The protein resides in the cytoplasm. It carries out the reaction L-lysyl-[protein] + 3 S-adenosyl-L-methionine = N(6),N(6),N(6)-trimethyl-L-lysyl-[protein] + 3 S-adenosyl-L-homocysteine + 3 H(+). Its function is as follows. Methylates ribosomal protein L11. This chain is Ribosomal protein L11 methyltransferase, found in Ectopseudomonas mendocina (strain ymp) (Pseudomonas mendocina).